Here is a 774-residue protein sequence, read N- to C-terminus: Transmembrane GTPase fzo-1 (774 aa).

The disordered stretch occupies residues 1–29; the sequence is MSGTASLVHTLPASGDSNHRGLHSLKNSR. The Cytoplasmic portion of the chain corresponds to 1 to 617; sequence MSGTASLVHT…EEQAMMTQMV (617 aa). The segment covering 20–29 has biased composition (basic residues); sequence RGLHSLKNSR. Positions 51-71 form a coiled coil; that stretch reads YGELKDNVAELEGVYKDIKEN. Positions 97 to 352 constitute a Dynamin-type G domain; it reads QRDNMKVVFF…TRALEFQNFE (256 aa). A G1 motif region spans residues 107-114; the sequence is GRTSNGKS. 110–115 serves as a coordination point for GTP; the sequence is SNGKST. Residues 133–134 form a G2 motif region; that stretch reads TT. A G3 motif region spans residues 211–214; the sequence is DSPG. Residue 270-273 coordinates GTP; sequence NRWD. The G4 motif stretch occupies residues 270–273; it reads NRWD. Position 300 (Glu-300) is a region of interest, G5 motif. Residue Ser-317 participates in GTP binding. Residues 385–415 adopt a coiled-coil conformation; sequence NLNSVLTSAAEQRSKLQNNLNESTRTFNECR. A helical transmembrane segment spans residues 618–638; the sequence is LTSAAFLANGSLGVLVVGGIV. Residues 639–640 lie on the Mitochondrial intermembrane side of the membrane; sequence YK. Residues 641–661 traverse the membrane as a helical segment; sequence AVGWRVIAVGGAAYAGLYAWE. The Cytoplasmic segment spans residues 662-774; the sequence is RMRWNSGAKE…YLRSDSPPTP (113 aa).

The protein belongs to the TRAFAC class dynamin-like GTPase superfamily. Dynamin/Fzo/YdjA family. Mitofusin subfamily. In terms of assembly, interacts with ced-9; interaction may be suppressed by interaction of ced-9 with egl-1.

It is found in the mitochondrion outer membrane. It catalyses the reaction GTP + H2O = GDP + phosphate + H(+). Its function is as follows. Probable transmembrane GTPase. Mediates mitochondrial fusion. Fusion of mitochondria occurs in many cell types and constitutes an important step in mitochondria morphology, which is balanced between fusion and fission. Dispensable for normal apoptotic processes during embryonic development. The sequence is that of Transmembrane GTPase fzo-1 from Caenorhabditis elegans.